We begin with the raw amino-acid sequence, 260 residues long: Acyl-coenzyme A diphosphatase FITM2 (260 aa).

The Cytoplasmic portion of the chain corresponds to 1–23 (MERLENCAQMFQRKFLNEAFRRH). The chain crosses the membrane as a helical span at residues 24-44 (CPVLLACIALGGSLLKELSPL). The Lumenal portion of the chain corresponds to 45 to 57 (PDSYWNNKRNVLN). A helical transmembrane segment spans residues 58 to 78 (VYFVKFCWGWTLWLLLPFITL). Over 79 to 93 (TNYKLTGSITKVLRR) the chain is Cytoplasmic. A helical membrane pass occupies residues 94–114 (LSSLLVGTLFWYLCTNLFLYI). Residues 115-144 (EHITGSCYESEALLDSIEHQDRKECRLHGG) are Lumenal-facing. A helical transmembrane segment spans residues 145–165 (FWHGFDISGHCFLLSYCILII). His154 is an active-site residue. Residues 166–189 (LEETSVIRSIQFERHWHRMAINAQ) lie on the Cytoplasmic side of the membrane. Transmembrane regions (helical) follow at residues 190–210 (FTAL…TAVY) and 211–231 (FHNI…WYIT). His212 is a catalytic residue. The Cytoplasmic segment spans residues 232–260 (YRWWYLQPISPGLPPASASHSEKEPVYKN).

It belongs to the FIT family. FIT2 subfamily.

It localises to the endoplasmic reticulum membrane. The enzyme catalyses an acyl-CoA + H2O = an acyl-4'-phosphopantetheine + adenosine 3',5'-bisphosphate + 2 H(+). In terms of biological role, fatty acyl-coenzyme A (CoA) diphosphatase that hydrolyzes fatty acyl-CoA to yield acyl-4'-phosphopantetheine and adenosine 3',5'-bisphosphate. Preferentially hydrolyzes unsaturated long-chain acyl-CoA substrates in the endoplasmic reticulum (ER) lumen. This catalytic activity is required for maintaining ER structure and for lipid droplets (LDs) biogenesis, which are lipid storage organelles involved in maintaining lipid and energy homeostasis. May directly bind to diacylglycerol (DAGs) and triacylglycerol, which is also important for LD biogenesis. May support directional budding of nacent LDs from the ER into the cytosol by reducing DAG levels at sites of LD formation. May play a role in the regulation of cell morphology, ER morphology and cytoskeletal organization. This is Acyl-coenzyme A diphosphatase FITM2 from Xenopus laevis (African clawed frog).